Consider the following 472-residue polypeptide: UDP-N-acetylmuramate--L-alanine ligase (472 aa).

ATP is bound at residue 122–128 (GSHGKTT).

Belongs to the MurCDEF family.

It is found in the cytoplasm. It carries out the reaction UDP-N-acetyl-alpha-D-muramate + L-alanine + ATP = UDP-N-acetyl-alpha-D-muramoyl-L-alanine + ADP + phosphate + H(+). It functions in the pathway cell wall biogenesis; peptidoglycan biosynthesis. Functionally, cell wall formation. This Prochlorococcus marinus (strain SARG / CCMP1375 / SS120) protein is UDP-N-acetylmuramate--L-alanine ligase.